We begin with the raw amino-acid sequence, 904 residues long: Serine/arginine repetitive matrix protein 1 (904 aa).

Methionine 1 carries the post-translational modification N-acetylmethionine. A necessary for DNA and RNA-binding region spans residues 1 to 151 (MDAGFFRGTS…ASMKKQDEDK (151 aa)). The necessary for mRNA 3'-end cleavage and cytoplasmic accumulation stretch occupies residues 1-156 (MDAGFFRGTS…QDEDKDKRDK (156 aa)). Residue arginine 7 is modified to Citrulline. The PWI domain maps to 27–126 (QLKFAECLEK…AGIPSAFLEL (100 aa)). Lysine 127 is covalently cross-linked (Glycyl lysine isopeptide (Lys-Gly) (interchain with G-Cter in SUMO2)). Positions 139–170 (EKLASMKKQDEDKDKRDKEEKESSREKRERSR) are enriched in basic and acidic residues. The tract at residues 139 to 904 (EKLASMKKQD…MRKAQVSPQS (766 aa)) is disordered. An N6-acetyllysine modification is found at lysine 140. A compositionally biased stretch (basic residues) spans 171 to 207 (SPRRRKSRSPSPRRRSSPVRRERKRSHSRSPRHRTKS). The segment covering 214–234 (PEKKEKTPELPEPSVKVKEPS) has biased composition (basic and acidic residues). Threonine 220 is subject to Phosphothreonine. Position 227 is a phosphoserine (serine 227). Lysine 231 is covalently cross-linked (Glycyl lysine isopeptide (Lys-Gly) (interchain with G-Cter in SUMO1); alternate). Residue lysine 231 forms a Glycyl lysine isopeptide (Lys-Gly) (interchain with G-Cter in SUMO2); alternate linkage. Phosphoserine is present on residues serine 234 and serine 240. Position 241 is a phosphothreonine (threonine 241). Residues 246–275 (KVPKPEPIPEPKEPSPEKNSKKEKEKEKTR) show a composition bias toward basic and acidic residues. A Glycyl lysine isopeptide (Lys-Gly) (interchain with G-Cter in SUMO2) cross-link involves residue lysine 249. Position 260 is a phosphoserine (serine 260). 2 stretches are compositionally biased toward basic residues: residues 276 to 329 (PRSR…RTPP) and 336 to 351 (PRHRRSRSPVRRRRRS). Residues 300–688 (RRHRSRSRSY…NKRHSPSPRP (389 aa)) are necessary for speckles and matrix localization. Positions 352–368 (SASLSGSSSSSSSSRSR) are enriched in low complexity. A phosphoserine mark is found at serine 389, serine 391, serine 393, and serine 402. Threonine 406 is subject to Phosphothreonine. Phosphoserine is present on serine 414. Threonine 416 bears the Phosphothreonine mark. 4 positions are modified to phosphoserine: serine 420, serine 429, serine 431, and serine 436. The span at 428 to 438 (VSVSPGRTSGK) shows a compositional bias: polar residues. Residue lysine 447 forms a Glycyl lysine isopeptide (Lys-Gly) (interchain with G-Cter in SUMO2) linkage. 2 positions are modified to phosphoserine: serine 450 and serine 452. Lysine 459 participates in a covalent cross-link: Glycyl lysine isopeptide (Lys-Gly) (interchain with G-Cter in SUMO2). 2 positions are modified to phosphoserine: serine 463 and serine 465. Lysine 472 participates in a covalent cross-link: Glycyl lysine isopeptide (Lys-Gly) (interchain with G-Cter in SUMO2). Position 478 is a phosphoserine (serine 478). Residues 478-501 (SVQQRRQYRRQNQQSSSDSGSSSS) are compositionally biased toward low complexity. The segment covering 503–518 (EDERPKRSHVKNGEVG) has biased composition (basic and acidic residues). 7 positions are modified to phosphoserine: serine 524, serine 526, serine 528, serine 530, serine 532, serine 549, and serine 551. A compositionally biased stretch (basic residues) spans 533–560 (PRKRQKETSPRGRRRRSPSPPPTRRRRS). Position 555 is a phosphothreonine (threonine 555). Residues serine 560 and serine 562 each carry the phosphoserine modification. The segment covering 567–592 (PRRRRTPTPPPRRRTPSPPPRRRSPS) has biased composition (basic residues). Phosphothreonine occurs at positions 572, 574, and 581. Residue serine 583 is modified to Phosphoserine. Over residues 593–605 (PRRYSPPIQRRYS) the composition is skewed to low complexity. A Phosphotyrosine modification is found at tyrosine 596. Residues serine 597, serine 605, and serine 607 each carry the phosphoserine modification. Phosphothreonine is present on threonine 614. Phosphoserine is present on residues serine 616, serine 626, serine 628, serine 636, and serine 638. The span at 621-636 (PKRRASPSPPPKRRVS) shows a compositional bias: basic residues. Over residues 649 to 663 (TKRRSPSLSSKHRKG) the composition is skewed to basic residues. Phosphoserine occurs at positions 694, 695, 696, 705, 707, 713, and 715. Low complexity-rich tracts occupy residues 701-719 (RRGASSSPQRRQSPSPSTR) and 736-759 (AASPSPQSVRRVSSSRSVSGSPEP). The residue at position 718 (threonine 718) is a Phosphothreonine. Phosphoserine is present on residues serine 738, serine 740, serine 748, serine 752, serine 754, serine 756, serine 769, serine 773, serine 775, and serine 777. A compositionally biased stretch (low complexity) spans 771–786 (VQSQSPSTNWSPAVPV). The residue at position 778 (threonine 778) is a Phosphothreonine. A phosphoserine mark is found at serine 781 and serine 791. A Phosphothreonine modification is found at threonine 793. Residues serine 795, serine 797, and serine 802 each carry the phosphoserine modification. Residues 809 to 834 (KKKKKKKDKKHKKDKKHKKHKKHKKE) are compositionally biased toward basic residues. Over residues 837-866 (VAAAAAAAVTPAAIAAATTTLAQEEPVAAP) the composition is skewed to low complexity. Residue lysine 869 forms a Glycyl lysine isopeptide (Lys-Gly) (interchain with G-Cter in SUMO2) linkage. Position 872 is a phosphothreonine (threonine 872). Serine 874 bears the Phosphoserine mark. Basic and acidic residues predominate over residues 882–892 (DLEKHLREKAL). Phosphoserine is present on serine 901.

Belongs to the splicing factor SR family. Identified in the spliceosome C complex. Found in a pre-mRNA splicing complex with SFRS4, SFRS5, SNRP70, SNRPA1, SRRM1 and SRRM2. Found in a pre-mRNA exonic splicing enhancer (ESE) complex with SNRP70, SNRPA1, SRRM1 and TRA2B/SFRS10. Component of the minor spliceosome, which splices U12-type introns. Found in a mRNA splicing-dependent exon junction complex (EJC) with DEK, PRPF8, NCBP1, RBM8A, RNPS1, SRRM1 and ALYREF/THOC4. Interacts with DDX39B, CPSF1, RBM8A, RNPS1, and ALYREF/THOC4. Seems to be a compound of RNA export complexes that are released from speckles in a ATP-dependent manner. In terms of processing, phosphorylated on multiple serine and threonine residues by DYRK3 during the G2-to-M transition, after the nuclear-envelope breakdown. Phosphorylation by DYRK3 promotes disassembly of nuclear speckles. Citrullinated by PADI4.

The protein resides in the nucleus matrix. It is found in the nucleus speckle. Functionally, part of pre- and post-splicing multiprotein mRNP complexes. As a component of the minor spliceosome, involved in the splicing of U12-type introns in pre-mRNAs. Involved in numerous pre-mRNA processing events. Promotes constitutive and exonic splicing enhancer (ESE)-dependent splicing activation by bridging together sequence-specific (SR family proteins, SFRS4, SFRS5 and TRA2B/SFRS10) and basal snRNP (SNRP70 and SNRPA1) factors of the spliceosome. Stimulates mRNA 3'-end cleavage independently of the formation of an exon junction complex. Binds both pre-mRNA and spliced mRNA 20-25 nt upstream of exon-exon junctions. Binds RNA and DNA with low sequence specificity and has similar preference for either double- or single-stranded nucleic acid substrates. The protein is Serine/arginine repetitive matrix protein 1 (SRRM1) of Homo sapiens (Human).